Consider the following 314-residue polypeptide: Ribosomal RNA small subunit methyltransferase H (314 aa).

S-adenosyl-L-methionine contacts are provided by residues 32–34 (GGH), aspartate 52, phenylalanine 79, aspartate 100, and glutamine 107.

It belongs to the methyltransferase superfamily. RsmH family.

The protein resides in the cytoplasm. The catalysed reaction is cytidine(1402) in 16S rRNA + S-adenosyl-L-methionine = N(4)-methylcytidine(1402) in 16S rRNA + S-adenosyl-L-homocysteine + H(+). Functionally, specifically methylates the N4 position of cytidine in position 1402 (C1402) of 16S rRNA. The sequence is that of Ribosomal RNA small subunit methyltransferase H from Shouchella clausii (strain KSM-K16) (Alkalihalobacillus clausii).